The primary structure comprises 78 residues: Protein SlyX homolog (78 aa).

Belongs to the SlyX family.

This is Protein SlyX homolog from Xanthomonas oryzae pv. oryzae (strain MAFF 311018).